We begin with the raw amino-acid sequence, 174 residues long: Cytochrome c-550-like protein (174 aa).

The first 37 residues, 1 to 37 (MPGQTQGAKRWRVPGRGWRWAGILLLVWLGLASPAAG), serve as a signal peptide directing secretion. Residues Cys82, Cys85, His86, and Cys136 each contribute to the heme c site.

Belongs to the cytochrome c family. PsbV subfamily. The cofactor is heme c.

It localises to the cellular thylakoid membrane. In terms of biological role, possible low-potential cytochrome c. The sequence is that of Cytochrome c-550-like protein (psbV2) from Synechococcus sp. (strain JA-3-3Ab) (Cyanobacteria bacterium Yellowstone A-Prime).